A 421-amino-acid polypeptide reads, in one-letter code: Tubulin gamma-3 chain (421 aa).

94–100 (AGGTGSG) is a GTP binding site.

It belongs to the tubulin family.

It localises to the cytoplasm. The protein localises to the cytoskeleton. Its subcellular location is the microtubule organizing center. In terms of biological role, tubulin is the major constituent of microtubules. The gamma chain is found at microtubule organizing centers (MTOC) such as the spindle poles, suggesting that it is involved in the minus-end nucleation of microtubule assembly. The protein is Tubulin gamma-3 chain (TUBG3) of Zea mays (Maize).